Consider the following 765-residue polypeptide: MVRTKNQSSSSSASSSTKSPVKISGGGSSGANRSRSCSEALIDDGKTSSKLSSNRQRATITTTTTSTTPGSSPDDDTTDADLTPTSGYGPRGGTSVHKQNLYVVSFPIIFLFNVLRSLIYQLFCIFRYLYCASTKVIYRSPHRRDCNIEIVVQNSKEQQSIICPLERNTSDGIEKAQQLLPQRQRALLPLEMATNRGGSGGYSPGPGDPLLAKQKHHHRRAFEYISKALKIDEENEGHKELAIELYRKGIKELEDGIAVDCWSGRGDVWDRAQRLHEKMQTNLSMARDRLHFLALREEDLQMQRLSLMDPPKNKQQVTSKFKQPMLVGQTNSKAAAVEPSKITMRSSGYGPKPVSGTGSSAGTSKALQAASGRKLTIGNKRPGNLAVANKSQTLPRNLGSKTTSTSVGAALQRQPGKTAATPPAVRRQFSSGRNTPPQRSRTPINNNAASGSGSGSGASTPMISVKGVEQKLVQLIMDEIVEGGAKVEWTDIAGQDVAKQALQEMVILPSVRPELFTGLRAPAKGLLLFGPPGNGKTLLARAVATECSATFLNISAASLTSKYVGDGEKLVRALFAVARHLQPSIIFIDEVDSLLSERSSNEHEASRRLKTEFLVEFDGLPGNPEGDRIVVLAATNRPQELDEAALRRFTKRVYVSLPEVQTRELLLSRLLQKQGSPLDTEALARLAKITDGYSGSDLTALAKDAALEPIRELNVEQVKCLDISAMRPITEKDFHNSLKRIRRSVAPQSLNSYEKWSQDYGDITI.

A disordered region spans residues 1–94 (MVRTKNQSSS…TSGYGPRGGT (94 aa)). Residues 1–107 (MVRTKNQSSS…KQNLYVVSFP (107 aa)) lie on the Cytoplasmic side of the membrane. The tract at residues 1–195 (MVRTKNQSSS…ALLPLEMATN (195 aa)) is required for localization to punctate cytoplasmic foci. Low complexity predominate over residues 8 to 19 (SSSSSASSSTKS). The span at 48–58 (SSKLSSNRQRA) shows a compositional bias: polar residues. Residues 59–72 (TITTTTTSTTPGSS) are compositionally biased toward low complexity. The segment at residues 108 to 128 (IIFLFNVLRSLIYQLFCIFRY) is an intramembrane region (helical). At 129-765 (LYCASTKVIY…WSQDYGDITI (637 aa)) the chain is on the cytoplasmic side. Residues 193 to 765 (ATNRGGSGGY…WSQDYGDITI (573 aa)) form a sufficient for interaction with microtubules and microtubule severing region. Residues 218-293 (HRRAFEYISK…SMARDRLHFL (76 aa)) enclose the MIT domain. The segment at 329-462 (QTNSKAAAVE…GSGSGASTPM (134 aa)) is disordered. Low complexity predominate over residues 355–364 (SGTGSSAGTS). 2 stretches are compositionally biased toward polar residues: residues 389–407 (NKSQ…STSV) and 428–444 (QFSS…RTPI). The segment at 446-462 (NNAASGSGSGSGASTPM) is required for interaction with microtubules. 530–537 (GPPGNGKT) contacts ATP.

Belongs to the AAA ATPase family. Spastin subfamily. Homohexamer. The homohexamer is stabilized by ATP-binding. The homohexamer may adopt a ring conformation through which microtubules pass prior to being severed. Interacts with microtubules. Interacts with atl; may be involved in microtubule dynamics.

The protein resides in the membrane. Its subcellular location is the cytoplasm. The protein localises to the cytoskeleton. It is found in the microtubule organizing center. It localises to the centrosome. The protein resides in the chromosome. Its subcellular location is the lipid droplet. It catalyses the reaction n ATP + n H2O + a microtubule = n ADP + n phosphate + (n+1) alpha/beta tubulin heterodimers.. Functionally, ATP-dependent microtubule severing protein. Stimulates microtubule minus-end depolymerization and poleward microtubule flux in the mitotic spindle. Regulates microtubule stability in the neuromuscular junction synapse. Involved in lipid metabolism by regulating the size and distribution of lipid droplets. Involved in axon regeneration by regulating microtubule severing. The sequence is that of Spastin from Drosophila mojavensis (Fruit fly).